We begin with the raw amino-acid sequence, 436 residues long: GTPase Obg (436 aa).

The 159-residue stretch at 1 to 159 (MAFVDQATIE…LKVKLELRVL (159 aa)) folds into the Obg domain. An OBG-type G domain is found at 160 to 335 (ADVGLVGFPS…LLLKVADLLD (176 aa)). Residues 166–173 (GFPSAGKS), 191–195 (FTTID), 213–216 (DLPG), 285–288 (TKMD), and 316–318 (SSV) contribute to the GTP site. Serine 173 and threonine 193 together coordinate Mg(2+). The OCT domain maps to 357-436 (KDDHQSTDFQ…GADFAFEFEE (80 aa)).

The protein belongs to the TRAFAC class OBG-HflX-like GTPase superfamily. OBG GTPase family. As to quaternary structure, monomer. Mg(2+) is required as a cofactor.

It is found in the cytoplasm. Its function is as follows. An essential GTPase which binds GTP, GDP and possibly (p)ppGpp with moderate affinity, with high nucleotide exchange rates and a fairly low GTP hydrolysis rate. Plays a role in control of the cell cycle, stress response, ribosome biogenesis and in those bacteria that undergo differentiation, in morphogenesis control. The sequence is that of GTPase Obg from Oenococcus oeni (strain ATCC BAA-331 / PSU-1).